A 245-amino-acid chain; its full sequence is U21-ctenitoxin-Pn1a (245 aa).

A Peptidase S1 domain is found at 1 to 245; the sequence is IVYGTVTTPG…FRSWMDKVMT (245 aa). C30 and C46 are oxidised to a cystine. Residues H45 and D95 each act as charge relay system in the active site. Cystine bridges form between C161-C183 and C192-C221. The Charge relay system role is filled by S196.

As to expression, expressed by the venom gland.

It localises to the secreted. Protease. Hydrolyzes gelatin and succinyl casein. The chain is U21-ctenitoxin-Pn1a from Phoneutria nigriventer (Brazilian armed spider).